Here is a 478-residue protein sequence, read N- to C-terminus: Growth/differentiation factor 10 (478 aa).

Positions 1–33 are cleaved as a signal peptide; the sequence is MAHVPARTSPGPGPQLLLLLLPLFLLLLRDVAG. Positions 34–368 are excised as a propeptide; it reads SHRAPAWSAL…EKTMQKARRK (335 aa). N-linked (GlcNAc...) asparagine glycans are attached at residues asparagine 118, asparagine 156, and asparagine 281. The interval 266–319 is disordered; sequence YDPFPAGDPEPRAAPNNSADPRVRRAAQATGPLQDNELPGLDERPPRAHAQHFH. 3 disulfides stabilise this stretch: cysteine 376–cysteine 443, cysteine 405–cysteine 475, and cysteine 409–cysteine 477. A glycan (N-linked (GlcNAc...) asparagine) is linked at asparagine 469.

This sequence belongs to the TGF-beta family. In terms of assembly, homodimer or heterodimer. Can form a non-covalent complex of the mature region and the pro-region. As to expression, expressed in femur, brain, lung, skeletal muscle, pancreas and testis.

Its subcellular location is the secreted. Growth factor involved in osteogenesis and adipogenesis. Plays an inhibitory role in the process of osteoblast differentiation via SMAD2/3 pathway. Plays an inhibitory role in the process of adipogenesis. The sequence is that of Growth/differentiation factor 10 from Homo sapiens (Human).